Consider the following 485-residue polypeptide: Zinc finger protein 639 (485 aa).

The span at 1-14 (MSEYPKKRKRKTLH) shows a compositional bias: basic residues. Disordered regions lie at residues 1 to 23 (MSEYPKKRKRKTLHPSRYSDSSG) and 54 to 82 (DNKDDDSDPETANDLPKFTDGTKARSRSQ). Ser-60 carries the phosphoserine modification. Residue Lys-76 forms a Glycyl lysine isopeptide (Lys-Gly) (interchain with G-Cter in SUMO2) linkage. A Phosphoserine modification is found at Ser-88. Glycyl lysine isopeptide (Lys-Gly) (interchain with G-Cter in SUMO2) cross-links involve residues Lys-177, Lys-181, and Lys-226. 8 consecutive C2H2-type zinc fingers follow at residues 204-227 (YKCELCEFNSKYFSDLKQHVILKH), 233-255 (NVCRVCKESFSTNMLLIEHAKLH), 260-283 (YICKYCDYKTVIFENLSQHIADTH), 289-311 (YWCEQCDVQFSSSSELYLHFQEH), 374-397 (FVCQVCGFRSRLHTNVNRHVAIEH), 403-425 (HVCDDCGKGFSSMLEYCKHLNSH), 431-454 (YLCQYCEYSTGQIEDLKIHLDFKH), and 460-482 (HKCSDCLMRFGNERELISHLPVH). The interaction with CTNNA2 stretch occupies residues 371 to 455 (KNFFVCQVCG…LKIHLDFKHS (85 aa)).

It belongs to the krueppel C2H2-type zinc-finger protein family. Interacts with CTNNA2.

The protein localises to the nucleus. Functionally, binds DNA and may function as a transcriptional repressor. This is Zinc finger protein 639 (Znf639) from Rattus norvegicus (Rat).